A 211-amino-acid chain; its full sequence is Urease accessory protein UreG (211 aa).

11-18 (GPVGAGKT) contacts GTP.

Belongs to the SIMIBI class G3E GTPase family. UreG subfamily. As to quaternary structure, homodimer. UreD, UreF and UreG form a complex that acts as a GTP-hydrolysis-dependent molecular chaperone, activating the urease apoprotein by helping to assemble the nickel containing metallocenter of UreC. The UreE protein probably delivers the nickel.

The protein localises to the cytoplasm. Its function is as follows. Facilitates the functional incorporation of the urease nickel metallocenter. This process requires GTP hydrolysis, probably effectuated by UreG. The chain is Urease accessory protein UreG from Actinobacillus pleuropneumoniae (Haemophilus pleuropneumoniae).